We begin with the raw amino-acid sequence, 157 residues long: MAETADTINTTVSTPQPQLESRSDETSCLQKHRSDATSEVTKEEKSGGILFSVWPPCQKSRDYVVNSMIKTLSTDSILSYKYGTIKPEEASAVAKSIEEKAYDIASRFVSSDGIKNLEVYGIETSERMIESAEVRFKANGSMELLLNQTIKMMQLLI.

Over residues 1–20 (MAETADTINTTVSTPQPQLE) the composition is skewed to polar residues. The interval 1 to 41 (MAETADTINTTVSTPQPQLESRSDETSCLQKHRSDATSEVT) is disordered. The segment covering 32–41 (HRSDATSEVT) has biased composition (basic and acidic residues). The tract at residues 37–138 (TSEVTKEEKS…IESAEVRFKA (102 aa)) is WPP; degenerate.

Expressed in roots, stems and leaves.

It is found in the cytoplasm. The protein resides in the nucleus. Its function is as follows. Regulates the mitotic activity in roots. In Arabidopsis thaliana (Mouse-ear cress), this protein is WPP domain-containing protein 3 (WPP3).